An 80-amino-acid chain; its full sequence is Small ribosomal subunit protein bS16 (80 aa).

It belongs to the bacterial ribosomal protein bS16 family.

The polypeptide is Small ribosomal subunit protein bS16 (Laribacter hongkongensis (strain HLHK9)).